The primary structure comprises 485 residues: Aspartyl/glutamyl-tRNA(Asn/Gln) amidotransferase subunit B (485 aa).

Belongs to the GatB/GatE family. GatB subfamily. As to quaternary structure, heterotrimer of A, B and C subunits.

It carries out the reaction L-glutamyl-tRNA(Gln) + L-glutamine + ATP + H2O = L-glutaminyl-tRNA(Gln) + L-glutamate + ADP + phosphate + H(+). The catalysed reaction is L-aspartyl-tRNA(Asn) + L-glutamine + ATP + H2O = L-asparaginyl-tRNA(Asn) + L-glutamate + ADP + phosphate + 2 H(+). Allows the formation of correctly charged Asn-tRNA(Asn) or Gln-tRNA(Gln) through the transamidation of misacylated Asp-tRNA(Asn) or Glu-tRNA(Gln) in organisms which lack either or both of asparaginyl-tRNA or glutaminyl-tRNA synthetases. The reaction takes place in the presence of glutamine and ATP through an activated phospho-Asp-tRNA(Asn) or phospho-Glu-tRNA(Gln). The chain is Aspartyl/glutamyl-tRNA(Asn/Gln) amidotransferase subunit B from Cupriavidus taiwanensis (strain DSM 17343 / BCRC 17206 / CCUG 44338 / CIP 107171 / LMG 19424 / R1) (Ralstonia taiwanensis (strain LMG 19424)).